We begin with the raw amino-acid sequence, 609 residues long: MIPSYDPNDTEAGLKLLEDLTTNAEAIQQQVLHQILSQNSGTQYLRAFLDGEADKNQQSFKNKVPVVNYDDVKPFIQRIADGESSDIVSAQPITELLTSSGTSAGKPKLMPSTAEELERKTFFYSMLVPIMNKYVDGLDEGKGMYLLFIKPEIKTPSGLMARPVLTSYYKSQHFRNRPFNKYNVYTSPDQTILCQDSKQSMYCQLLCGLVQRSHVLRVGAVFASAFLRAVKFLEDHYKELCADIRTGTVTSWITDSSCRDSVLSILNGPNQELADEIESECAEKSWEGILRRIWPKAKYVEVIVTGSMAQYIPTLEFYSGGLPLVSTMYASSECYFGINLNPLCDPADVSYTLLPNMAYFEFLPVDDKSHEEIHFATHSNTDDDDDALKEDLIVNLVNVEVGQYYEIVITTFTGLYRYRVGDILKVTGFHNKAPQFRFVQRRNVVLSIDTDKTSEEDLLNAVTQAKLNHLQHPSSLLLTEYTSYADTSSIPGHYVLFWELKPRHSNDPPKLDDKTMEDCCSEVEDCLDYVYRRCRNRDKSIGPLEIRVVSLGTFDSLMDFCVSQGSSLNQYKTPRCVKSGGALEILDSRVIGRFFSKRVPQWEPLGLDS.

It belongs to the IAA-amido conjugating enzyme family.

Its function is as follows. Catalyzes the synthesis of indole-3-acetic acid (IAA)-amino acid conjugates, providing a mechanism for the plant to cope with the presence of excess auxin. Strongly reactive with Glu, Gln, Trp, Asp, Ala, Leu, Phe, Gly, Tyr, Met, Ile and Val. Appears to favor Glu over Asp while the other GH3 favor Asp over Glu. Little or no product formation with His, Ser, Thr, Arg, Lys, or Cys. Also active on pyruvic and butyric acid analogs of IAA, PAA and the synthetic auxin naphthaleneacetic acid (NAA). The two chlorinated synthetic auxin herbicides 2,4-D and 3,6-dichloro-o-anisic acid (dicamba) cannot be used as substrates. This chain is Indole-3-acetic acid-amido synthetase GH3.17 (GH3.17), found in Arabidopsis thaliana (Mouse-ear cress).